A 235-amino-acid chain; its full sequence is Protein FAM3B (235 aa).

The first 29 residues, 1–29 (MRPLAGGLLKVVFVVFASLCAWYSGYLLA), serve as a signal peptide directing secretion. Disulfide bonds link Cys63-Cys91 and Cys69-Cys229. The 162-residue stretch at 72-233 (DTYAYRLLSG…IQIEGCIPKE (162 aa)) folds into the GG-type lectin domain. Asn120 and Asn208 each carry an N-linked (GlcNAc...) asparagine glycan.

The protein belongs to the FAM3 family. 2 N-termini have been observed in the mature protein: the first at Glu-30, resulting from signal peptide cleavage, the second at Ser-46. Post-translationally, O-glycosylated. Highly expressed in the pancreas. Also found in the colon, kidney, prostate, small intestine and testis.

The protein resides in the secreted. Functionally, induces apoptosis of alpha and beta cells in a dose- and time-dependent manner. The sequence is that of Protein FAM3B (FAM3B) from Homo sapiens (Human).